A 235-amino-acid polypeptide reads, in one-letter code: Riboflavin kinase (235 aa).

2 residues coordinate Mg(2+): threonine 45 and asparagine 47. Residue glutamate 140 is the Nucleophile of the active site.

The protein belongs to the flavokinase family. Zn(2+) serves as cofactor. Requires Mg(2+) as cofactor.

It catalyses the reaction riboflavin + ATP = FMN + ADP + H(+). It participates in cofactor biosynthesis; FMN biosynthesis; FMN from riboflavin (ATP route): step 1/1. Functionally, catalyzes the phosphorylation of riboflavin (vitamin B2) to form flavin mononucleotide (FMN) coenzyme. This is Riboflavin kinase (FMN1) from Chaetomium globosum (strain ATCC 6205 / CBS 148.51 / DSM 1962 / NBRC 6347 / NRRL 1970) (Soil fungus).